Consider the following 252-residue polypeptide: Ribonuclease HII (252 aa).

The 192-residue stretch at 41–232 folds into the RNase H type-2 domain; it reads LLVAGVDEAG…VRLALEGREQ (192 aa). 3 residues coordinate a divalent metal cation: D47, E48, and D140.

Belongs to the RNase HII family. The cofactor is Mn(2+). Mg(2+) is required as a cofactor.

It is found in the cytoplasm. It catalyses the reaction Endonucleolytic cleavage to 5'-phosphomonoester.. Its function is as follows. Endonuclease that specifically degrades the RNA of RNA-DNA hybrids. This chain is Ribonuclease HII, found in Xanthomonas oryzae pv. oryzae (strain KACC10331 / KXO85).